Here is a 70-residue protein sequence, read N- to C-terminus: DNA-directed RNA polymerase subunit omega (70 aa).

It belongs to the RNA polymerase subunit omega family. In terms of assembly, the RNAP catalytic core consists of 2 alpha, 1 beta, 1 beta' and 1 omega subunit. When a sigma factor is associated with the core the holoenzyme is formed, which can initiate transcription.

The enzyme catalyses RNA(n) + a ribonucleoside 5'-triphosphate = RNA(n+1) + diphosphate. Functionally, promotes RNA polymerase assembly. Latches the N- and C-terminal regions of the beta' subunit thereby facilitating its interaction with the beta and alpha subunits. The sequence is that of DNA-directed RNA polymerase subunit omega from Staphylococcus saprophyticus subsp. saprophyticus (strain ATCC 15305 / DSM 20229 / NCIMB 8711 / NCTC 7292 / S-41).